We begin with the raw amino-acid sequence, 331 residues long: Phosphoenolpyruvate transferase (331 aa).

A 7,8-didemethyl-8-hydroxy-5-deazariboflavin-binding site is contributed by Asp-63.

The protein belongs to the CofD family. In terms of assembly, homodimer. It depends on Mg(2+) as a cofactor.

The enzyme catalyses enolpyruvoyl-2-diphospho-5'-guanosine + 7,8-didemethyl-8-hydroxy-5-deazariboflavin = dehydro coenzyme F420-0 + GMP + H(+). The protein operates within cofactor biosynthesis; coenzyme F420 biosynthesis. Catalyzes the transfer of the phosphoenolpyruvate moiety from enoylpyruvoyl-2-diphospho-5'-guanosine (EPPG) to 7,8-didemethyl-8-hydroxy-5-deazariboflavin (FO) with the formation of dehydro coenzyme F420-0 and GMP. The protein is Phosphoenolpyruvate transferase of Mycobacterium sp. (strain JLS).